The chain runs to 487 residues: Cytochrome c-552 (487 aa).

The signal sequence occupies residues 1–27 (MSKKWTRNTAAMAAILSALCLSTNALA). Residue His-104 coordinates heme c. Cys-132, Cys-135, and Lys-136 together coordinate heme. Heme c contacts are provided by Cys-170, Cys-173, His-174, Cys-219, Cys-222, and His-223. 4 residues coordinate Ca(2+): Glu-225, Tyr-226, Lys-271, and Gln-273. Residue Tyr-226 coordinates substrate. His-274 contributes to the substrate binding site. The heme c site is built by His-285, Cys-292, Cys-295, His-296, His-311, Cys-324, Cys-327, His-328, and His-403.

Belongs to the cytochrome c-552 family. It depends on Ca(2+) as a cofactor. Heme c is required as a cofactor.

The protein localises to the periplasm. It catalyses the reaction 6 Fe(III)-[cytochrome c] + NH4(+) + 2 H2O = 6 Fe(II)-[cytochrome c] + nitrite + 8 H(+). It functions in the pathway nitrogen metabolism; nitrate reduction (assimilation). Catalyzes the reduction of nitrite to ammonia, consuming six electrons in the process. This is Cytochrome c-552 from Photobacterium profundum (strain SS9).